The primary structure comprises 672 residues: MRSIRSFANDDRHVMVKHSTIYPSPEELEAVQNMVSTVECALKHVSDWLDETNKGTKTEGETEVKKDEAGENYSKDQGGRTLCGVMRIGLVAKGLLIKDDMDLELVLMCKDKPTETLLNTVKDNLPIQIQKLTEEKYQVEQCVNEASIIIRNTKEPTLTLKVILTSPLIRDELEKKDGENVSMKDPPDLLDRQKCLNALASLRHAKWFQARANGLKSCVIVLRILRDLCNRVPTWAPLKGWPLELICEKSIGTCNRPLGAGEALRRVMECLASGILLPGGPGLHDPCERDPTDALSYMTIQQKEDITHSAQHALRLSAFGQIYKVLEMDPLPSSKPFQKYSWSVTDKEGAGSSALKRPFEDGLGDDKDPNKKMKRNLRKILDSKAIDLMNALMRLNQIRPGLQYKLLSQSGPVHAPVFTMSVDVDGTTYEASGPSKKTAKLHVAVKVLQAMGYPTGFDADIECMSSDEKSDNESKNETVSSNSSNNTGNSTTETSSTLEVRTQGPILTASGKNPVMELNEKRRGLKYELISETGGSHDKRFVMEVEVDGQKFRGAGPNKKVAKASAALAALEKLFSGPNAANNKKKKIIPQAKGVVNTAVSAAVQAVRGRGRGTLTRGAFVGATAAPGYIAPGYGTPYGYSTAAPAYGLPKRMVLLPVMKFPTYPVPHYSFF.

The region spanning 5 to 363 is the DZF domain; it reads RSFANDDRHV…ALKRPFEDGL (359 aa). 2 disordered regions span residues 52 to 73 and 349 to 371; these read TNKG…GENY and GAGS…DPNK. Positions 357 to 371 are enriched in basic and acidic residues; the sequence is RPFEDGLGDDKDPNK. A DRBM 1 domain is found at 387 to 453; sequence DLMNALMRLN…AVKVLQAMGY (67 aa). Basic and acidic residues predominate over residues 466-476; it reads SDEKSDNESKN. Positions 466–499 are disordered; it reads SDEKSDNESKNETVSSNSSNNTGNSTTETSSTLE. Over residues 477–497 the composition is skewed to low complexity; the sequence is ETVSSNSSNNTGNSTTETSST. One can recognise a DRBM 2 domain in the interval 510-576; it reads SGKNPVMELN…ALAALEKLFS (67 aa). Asymmetric dimethylarginine occurs at positions 612 and 617.

As to quaternary structure, interacts with EIF2AK2. Associates with microtubules; it is unsure whether such interaction is direct or indirect.

Its subcellular location is the cytoplasm. Its function is as follows. Involved in spermatogenesis and sperm function. Plays a role in regulation of cell growth. Binds to double-stranded DNA and RNA. Binds most efficiently to poly(I:C) RNA than to poly(dI:dC) DNA. Binds also to single-stranded poly(G) RNA. Binds non-specifically to the mRNA PRM1 3'-UTR and adenovirus VA RNA. This is Spermatid perinuclear RNA-binding protein (STRBP) from Homo sapiens (Human).